The following is a 648-amino-acid chain: Replication restart protein PriA (648 aa).

In terms of domain architecture, Helicase ATP-binding spans 131–297 (TILNESNKPT…EIGKYQLVTL (167 aa)). Residue 144–151 (GVTGSGKT) participates in ATP binding. A DEAH box motif is present at residues 240-243 (DEEH). Cys-358, Cys-361, Cys-367, Cys-370, Cys-385, Cys-388, Cys-398, and Cys-401 together coordinate Zn(2+). One can recognise a Helicase C-terminal domain in the interval 393 to 548 (KIFSSCPECL…SFFANELEIR (156 aa)).

Belongs to the helicase family. PriA subfamily. Component of the replication restart primosome. The cofactor is Zn(2+).

The enzyme catalyses Couples ATP hydrolysis with the unwinding of duplex DNA by translocating in the 3'-5' direction.. It carries out the reaction ATP + H2O = ADP + phosphate + H(+). Its function is as follows. Initiates the restart of stalled replication forks, which reloads the replicative helicase on sites other than the origin of replication. Recognizes and binds to abandoned replication forks and remodels them to uncover a helicase loading site. Promotes assembly of the primosome at these replication forks. The sequence is that of Replication restart protein PriA from Rickettsia felis (strain ATCC VR-1525 / URRWXCal2) (Rickettsia azadi).